A 152-amino-acid chain; its full sequence is Small ribosomal subunit protein uS13 (152 aa).

This sequence belongs to the universal ribosomal protein uS13 family. As to quaternary structure, part of the 30S ribosomal subunit. Forms a loose heterodimer with protein S19. Forms two bridges to the 50S subunit in the 70S ribosome.

Functionally, located at the top of the head of the 30S subunit, it contacts several helices of the 16S rRNA. In the 70S ribosome it contacts the 23S rRNA (bridge B1a) and protein L5 of the 50S subunit (bridge B1b), connecting the 2 subunits; these bridges are implicated in subunit movement. The chain is Small ribosomal subunit protein uS13 from Pyrobaculum arsenaticum (strain DSM 13514 / JCM 11321 / PZ6).